Reading from the N-terminus, the 525-residue chain is GMP synthase [glutamine-hydrolyzing] (525 aa).

One can recognise a Glutamine amidotransferase type-1 domain in the interval 9-207 (RILILDFGSQ…VRDICQCEAL (199 aa)). Residue Cys-86 is the Nucleophile of the active site. Residues His-181 and Glu-183 contribute to the active site. The GMPS ATP-PPase domain occupies 208–400 (WTPAKIIDDA…LGLPYDMLYR (193 aa)). ATP is bound at residue 235-241 (SGGVDSS).

As to quaternary structure, homodimer.

It catalyses the reaction XMP + L-glutamine + ATP + H2O = GMP + L-glutamate + AMP + diphosphate + 2 H(+). It functions in the pathway purine metabolism; GMP biosynthesis; GMP from XMP (L-Gln route): step 1/1. In terms of biological role, catalyzes the synthesis of GMP from XMP. The polypeptide is GMP synthase [glutamine-hydrolyzing] (Escherichia coli O127:H6 (strain E2348/69 / EPEC)).